The following is a 122-amino-acid chain: Large ribosomal subunit protein uL14c (122 aa).

Belongs to the universal ribosomal protein uL14 family. Part of the 50S ribosomal subunit.

The protein resides in the plastid. Its subcellular location is the chloroplast. Functionally, binds to 23S rRNA. This chain is Large ribosomal subunit protein uL14c, found in Pinus koraiensis (Korean pine).